A 710-amino-acid polypeptide reads, in one-letter code: Early transcription factor 82 kDa subunit (710 aa).

Belongs to the poxviridae VETF large subunit family. As to quaternary structure, heterodimer of a 70 kDa and a 82 kDa subunit. Part of the early transcription complex composed of ETF, RAP94/OPG109, and the DNA-directed RNA polymerase.

The protein localises to the virion. Its function is as follows. Acts with RNA polymerase to initiate transcription from early gene promoters. Is recruited by the RPO-associated protein of 94 kDa RAP94/OPG109 to form the early transcription complex, which also contains the core RNA polymerase. ETF heterodimer binds to early gene promoters. In Monkeypox virus, this protein is Early transcription factor 82 kDa subunit (OPG133).